The sequence spans 395 residues: MAKEKFARTKVHMNVGTIGHVDHGKTTLSAAITSYCAKKFGDKQLKYDEIDNAPEEKARGITINTRHLEYQSDRRHYAHIDCPGHADYVKNMITGAAQMDGGILVVSAPDGVMPQTKEHLLLARQVGVPSIIVFLNKVDLVDDPELLELVEEEVRDALAGYGFSRETPIVKGSAFKALQDGASPEDAACIEELLAAMDSYFEDPVRDDARPFLLSIEDVYTISGRGTVVTGRIECGVISLNEEVEIVGIKPTKKTVVTGIEMFNKLLDQGIAGDNVGLLLRGVDKKEVERGQVLSKPGSIKPHTKFEAQIYVLSKEEGGRHSPFFQGYRPQFYFRTTDITGTISLPEGVDMVKPGDNTKIIGELIHPIAMDKGLKLAIREGGRTIASGQVTEILL.

Residues 10–205 (KVHMNVGTIG…AMDSYFEDPV (196 aa)) form the tr-type G domain. The interval 19–26 (GHVDHGKT) is G1. 19-26 (GHVDHGKT) lines the GTP pocket. Residue threonine 26 participates in Mg(2+) binding. The interval 60-64 (GITIN) is G2. The interval 81 to 84 (DCPG) is G3. GTP-binding positions include 81–85 (DCPGH) and 136–139 (NKVD). Residues 136-139 (NKVD) form a G4 region. The interval 173 to 175 (SAF) is G5.

Belongs to the TRAFAC class translation factor GTPase superfamily. Classic translation factor GTPase family. EF-Tu/EF-1A subfamily. In terms of assembly, monomer.

The protein localises to the cytoplasm. The enzyme catalyses GTP + H2O = GDP + phosphate + H(+). In terms of biological role, GTP hydrolase that promotes the GTP-dependent binding of aminoacyl-tRNA to the A-site of ribosomes during protein biosynthesis. The chain is Elongation factor Tu from Treponema pallidum (strain Nichols).